The sequence spans 475 residues: Protein transport protein Sec61 subunit alpha (475 aa).

Residues 1–32 (MGFRFLDIVKPFTSLVPEVGQPDRKIPFREKV) lie on the Cytoplasmic side of the membrane. Residues 33 to 53 (LWTAICLFIFLVCSQIPLYGI) traverse the membrane as a helical segment. At 54-75 (RSTDSSDPFYWAKVIMASNRGT) the chain is on the lumenal side. Residues 76 to 96 (LMELGISPIVTSGMVMQLLAG) form a helical membrane-spanning segment. Over 97–118 (AKLIEIDQSVKADRDLFSAAQK) the chain is Cytoplasmic. A helical transmembrane segment spans residues 119–139 (LFGMLICVGQGVAYIWSGSYG). Residues 140 to 145 (DPAVLG) are Lumenal-facing. The helical transmembrane segment at 146 to 166 (FGNCFLIVLQLFFAGIIVMLL) threads the bilayer. Residues 167-173 (DELLQKG) lie on the Cytoplasmic side of the membrane. A helical transmembrane segment spans residues 174-194 (YGIGSGISLFIATNICETIVW). At 195–241 (KTFSPTTVSVGKGTEFEGAVIALFHLLLTRNDKVRALKEAFYRQNLP) the chain is on the lumenal side. Residues 242 to 262 (NITNLLATVLIFMVVIYFQGF) traverse the membrane as a helical segment. Residues 263 to 289 (RVDLPVKSTRVSGQQGTYPIKLFYTSN) are Cytoplasmic-facing. The chain crosses the membrane as a helical span at residues 290 to 310 (IPIILQSALVSNLYFISQLLY). The Lumenal portion of the chain corresponds to 311-353 (RRFPDNILVNLFGAWRTSEYSQQMIPVSGLTYYISSPNNMSAV). The helical transmembrane segment at 354–374 (LADPFHALFYITFMLTSCALF) threads the bilayer. Residues 375-411 (SKVWIEVSGSSARDVAKQLKDQQMTMKGHRDTSVIKE) are Cytoplasmic-facing. A helical membrane pass occupies residues 412 to 434 (LNRYIPTAAAFGGLCIGALTVVA). Over 435-440 (DFMGAI) the chain is Lumenal. The helical transmembrane segment at 441 to 461 (GSGTGILLAVTIIYQYFETFV) threads the bilayer. Residues 462-475 (KEQQELSGGIGGLF) are Cytoplasmic-facing.

It belongs to the SecY/SEC61-alpha family. As to quaternary structure, heterotrimeric complex composed of SEC61-alpha, SEC61-beta and SEC61-gamma.

It is found in the endoplasmic reticulum membrane. Its function is as follows. Appears to play a crucial role in the insertion of secretory and membrane polypeptides into the ER. It is required for assembly of membrane and secretory proteins. Found to be tightly associated with membrane-bound ribosomes, either directly or through adaptor proteins. In Dictyostelium discoideum (Social amoeba), this protein is Protein transport protein Sec61 subunit alpha (sec61a).